The primary structure comprises 463 residues: Glycine--tRNA ligase (463 aa).

Positions 98 and 174 each coordinate substrate. ATP-binding positions include 206–208 (RNE), 216–221 (FRTREF), 290–291 (EL), and 334–337 (GADR). 221-225 (FEQME) is a substrate binding site. 330 to 334 (EPSLG) provides a ligand contact to substrate.

This sequence belongs to the class-II aminoacyl-tRNA synthetase family. Homodimer.

It localises to the cytoplasm. It carries out the reaction tRNA(Gly) + glycine + ATP = glycyl-tRNA(Gly) + AMP + diphosphate. In terms of biological role, catalyzes the attachment of glycine to tRNA(Gly). The sequence is that of Glycine--tRNA ligase from Staphylococcus haemolyticus (strain JCSC1435).